The chain runs to 145 residues: Large ribosomal subunit protein uL11 (145 aa).

It belongs to the universal ribosomal protein uL11 family. As to quaternary structure, part of the ribosomal stalk of the 50S ribosomal subunit. Interacts with L10 and the large rRNA to form the base of the stalk. L10 forms an elongated spine to which L12 dimers bind in a sequential fashion forming a multimeric L10(L12)X complex. One or more lysine residues are methylated.

Functionally, forms part of the ribosomal stalk which helps the ribosome interact with GTP-bound translation factors. The sequence is that of Large ribosomal subunit protein uL11 from Sulfurihydrogenibium sp. (strain YO3AOP1).